The sequence spans 205 residues: UPF0301 protein AZC_0488 (205 aa).

It belongs to the UPF0301 (AlgH) family.

In Azorhizobium caulinodans (strain ATCC 43989 / DSM 5975 / JCM 20966 / LMG 6465 / NBRC 14845 / NCIMB 13405 / ORS 571), this protein is UPF0301 protein AZC_0488.